The chain runs to 282 residues: V-set domain-containing T-cell activation inhibitor 1 (282 aa).

Positions 1 to 24 (MASLGQIIFWSIINVIIILAGAIV) are cleaved as a signal peptide. Ig-like V-type domains lie at 35 to 144 (HFIT…ANLE) and 153 to 241 (PEIN…IKVT). Cystine bridges form between cysteine 56–cysteine 130 and cysteine 168–cysteine 225. N-linked (GlcNAc...) asparagine glycosylation occurs at asparagine 216. The GPI-anchor amidated glycine moiety is linked to residue glycine 257. Positions 258–282 (PSPCVSSVSAAGWALLSLSCCLMLR) are cleaved as a propeptide — removed in mature form.

This sequence belongs to the immunoglobulin superfamily. BTN/MOG family. N-glycosylated.

Its subcellular location is the cell membrane. Functionally, negatively regulates T-cell-mediated immune response by inhibiting T-cell activation, proliferation, cytokine production and development of cytotoxicity. When expressed on the cell surface of tumor macrophages, plays an important role, together with regulatory T-cells (Treg), in the suppression of tumor-associated antigen-specific T-cell immunity. Involved in promoting epithelial cell transformation. The protein is V-set domain-containing T-cell activation inhibitor 1 of Rattus norvegicus (Rat).